Reading from the N-terminus, the 313-residue chain is Putative S-adenosyl-L-methionine-dependent methyltransferase MMAR_0955 (313 aa).

Residues aspartate 132 and 161–162 contribute to the S-adenosyl-L-methionine site; that span reads DL.

It belongs to the UPF0677 family.

In terms of biological role, exhibits S-adenosyl-L-methionine-dependent methyltransferase activity. The chain is Putative S-adenosyl-L-methionine-dependent methyltransferase MMAR_0955 from Mycobacterium marinum (strain ATCC BAA-535 / M).